The primary structure comprises 172 residues: Protein-export protein SecB (172 aa).

It belongs to the SecB family. As to quaternary structure, homotetramer, a dimer of dimers. One homotetramer interacts with 1 SecA dimer.

The protein localises to the cytoplasm. Its function is as follows. One of the proteins required for the normal export of preproteins out of the cell cytoplasm. It is a molecular chaperone that binds to a subset of precursor proteins, maintaining them in a translocation-competent state. It also specifically binds to its receptor SecA. This Bordetella avium (strain 197N) protein is Protein-export protein SecB.